The primary structure comprises 381 residues: Queuine tRNA-ribosyltransferase (381 aa).

Asp90 acts as the Proton acceptor in catalysis. Substrate contacts are provided by residues 90-94 (DSGGF), Asp144, Gln193, and Gly221. Residues 252 to 258 (GVGTPEN) form an RNA binding region. The active-site Nucleophile is Asp271. Positions 276-280 (TRNAR) are RNA binding; important for wobble base 34 recognition. Zn(2+) contacts are provided by Cys309, Cys311, Cys314, and His340.

This sequence belongs to the queuine tRNA-ribosyltransferase family. Homodimer. Within each dimer, one monomer is responsible for RNA recognition and catalysis, while the other monomer binds to the replacement base PreQ1. The cofactor is Zn(2+).

It catalyses the reaction 7-aminomethyl-7-carbaguanine + guanosine(34) in tRNA = 7-aminomethyl-7-carbaguanosine(34) in tRNA + guanine. The protein operates within tRNA modification; tRNA-queuosine biosynthesis. In terms of biological role, catalyzes the base-exchange of a guanine (G) residue with the queuine precursor 7-aminomethyl-7-deazaguanine (PreQ1) at position 34 (anticodon wobble position) in tRNAs with GU(N) anticodons (tRNA-Asp, -Asn, -His and -Tyr). Catalysis occurs through a double-displacement mechanism. The nucleophile active site attacks the C1' of nucleotide 34 to detach the guanine base from the RNA, forming a covalent enzyme-RNA intermediate. The proton acceptor active site deprotonates the incoming PreQ1, allowing a nucleophilic attack on the C1' of the ribose to form the product. After dissociation, two additional enzymatic reactions on the tRNA convert PreQ1 to queuine (Q), resulting in the hypermodified nucleoside queuosine (7-(((4,5-cis-dihydroxy-2-cyclopenten-1-yl)amino)methyl)-7-deazaguanosine). The polypeptide is Queuine tRNA-ribosyltransferase (Helicobacter hepaticus (strain ATCC 51449 / 3B1)).